Here is a 571-residue protein sequence, read N- to C-terminus: MQMEANDCQEEHKFTLDNYHVVEQVRRGKSSSDFVVLHDIEDKKYAMKKICLAKHTDKLKQTALQEMKLLSSLKNPYIVHYEDSWIDNDNNACIFTAYYEGGNMANAIKKARGKLFPEERIFKWLAQLLLAVNYLHSNRVVHMDLTCSNIFLPKDDHVQLGNYGLAKLINPEKPVSMVSGISNSMCPEVLEDQPYGYKSDIWSLGCCMYEITAHQPAFKAPDMAGLINKINRSLMSPLPIVYSSTLKQMIKLMLRKKPEYRPTACELLRNPSLQPYLLQCQNLSPIYLPVFPIKPVNSPKDKARRNSLPGKFGKERVSREKSEVSRSLENLYPFWTNTETGSSSSSQPASSTNGAEDKLETKRIDPSCDTLKISEFTSQKSDESLIDPDIAVYSTETPAEENALPKETENIFSEESQLRDVDVGVVSAQEVACSPPRAIEEAETQEALPKPKEQITVPISSVAHSSTEVAAAKDHLSGSLEGDKAKMVKLTASEMSSVLSKLTKLGPPQSKERADALECLLEKCAGLVKQEKYEELAGLLTPFGEDGVSARDTAIWFAKTLLSSDKLNQGT.

The region spanning 19 to 277 (YHVVEQVRRG…LRNPSLQPYL (259 aa)) is the Protein kinase domain. ATP is bound by residues 25-33 (VRRGKSSSD) and lysine 48. Aspartate 144 functions as the Proton acceptor in the catalytic mechanism. 2 disordered regions span residues 298–321 (SPKD…SREK) and 338–363 (TETG…ETKR). The span at 312–321 (FGKERVSREK) shows a compositional bias: basic and acidic residues. A compositionally biased stretch (low complexity) spans 342–351 (SSSSSQPASS).

This sequence belongs to the protein kinase superfamily. NEK Ser/Thr protein kinase family. NIMA subfamily.

The catalysed reaction is L-seryl-[protein] + ATP = O-phospho-L-seryl-[protein] + ADP + H(+). It carries out the reaction L-threonyl-[protein] + ATP = O-phospho-L-threonyl-[protein] + ADP + H(+). Functionally, may be involved in plant development processes. This Arabidopsis thaliana (Mouse-ear cress) protein is Serine/threonine-protein kinase Nek7 (NEK7).